The sequence spans 553 residues: Phosphoenolpyruvate carboxykinase (ATP) (553 aa).

A disordered region spans residues 1-22 (MAPPTAVGSSINFEGHPTIKST). Position 255–262 (255–262 (GLSGTGKT)) interacts with ATP.

This sequence belongs to the phosphoenolpyruvate carboxykinase (ATP) family.

The enzyme catalyses oxaloacetate + ATP = phosphoenolpyruvate + ADP + CO2. The protein operates within carbohydrate biosynthesis; gluconeogenesis. This Candida albicans (Yeast) protein is Phosphoenolpyruvate carboxykinase (ATP) (PCK1).